The sequence spans 233 residues: Choline-phosphate cytidylyltransferase (233 aa).

Residues Leu6, Ala8, Gly9, Tyr80, Ser85, and Ala101 each coordinate CDP-choline. Asp102 is a binding site for Mg(2+). Tyr187 is a binding site for CDP-choline. Residues Glu213 and Asp215 each contribute to the Mg(2+) site.

This sequence belongs to the LicC/PntC cytidylyltransferase family. Mg(2+) serves as cofactor.

The catalysed reaction is phosphocholine + CTP + H(+) = CDP-choline + diphosphate. Its pathway is lipopolysaccharide biosynthesis. Its function is as follows. Cytidylyltransferase involved in the biosynthesis of lipopolysaccharides (LPS), a necessary component and antigenic determinant of the outer membrane that has been shown to be an important factor in the host-parasite interaction in a number of Gram-negative species. Catalyzes the activation of phosphocholine (P-Cho) to CDP-choline (CDP-Cho). LicC is critical for the expression of the 6A2-specific epitope. This is Choline-phosphate cytidylyltransferase from Haemophilus influenzae (strain ATCC 51907 / DSM 11121 / KW20 / Rd).